A 147-amino-acid chain; its full sequence is Protein J1 homolog (147 aa).

The protein belongs to the chordopoxvirinae J1 family. In terms of assembly, homodimer. Part of a complex composed of A30, G7, F10 kinase, A15, D2, D3, and J1. Interacts with A45.

The protein localises to the virion. It localises to the host cytoplasm. Its function is as follows. Late protein which is a part of a large complex required for early virion morphogenesis. This complex participates in the formation of virosomes and the incorporation of virosomal contents into nascent immature virions. J1 protein is required for DNA packaging during immature virions (IV) formation. This chain is Protein J1 homolog, found in Sheeppox virus (strain KS-1) (SPPV).